The following is a 405-amino-acid chain: Dynactin subunit 2 (405 aa).

The disordered stretch occupies residues 1–24 (MADPKYANLPGIASNEPDVYETSD). 2 coiled-coil regions span residues 102 to 125 (QQKYQRLVNEIHELCQDVEKIQTS) and 379 to 405 (QQTMKENLLAVEENFSALDQRMKKLNK).

The protein belongs to the dynactin subunit 2 family. As to quaternary structure, subunit of dynactin, a multiprotein complex part of a tripartite complex with dynein and a adapter, such as BICDL1, BICD2 or HOOK3. The dynactin complex is built around ACTR1A/ACTB filament and consists of an actin-related filament composed of a shoulder domain, a pointed end and a barbed end. Its length is defined by its flexible shoulder domain. The soulder is composed of 2 DCTN1 subunits, 4 DCTN2 and 2 DCTN3.

Its subcellular location is the cytoplasm. It localises to the cytoskeleton. The protein localises to the microtubule organizing center. It is found in the centrosome. The protein resides in the membrane. In terms of biological role, part of the dynactin complex that activates the molecular motor dynein for ultra-processive transport along microtubules. In the dynactin soulder domain, binds the ACTR1A filament and acts as a molecular ruler to determine the length. Modulates cytoplasmic dynein binding to an organelle, and plays a role in prometaphase chromosome alignment and spindle organization during mitosis. Involved in anchoring microtubules to centrosomes. The polypeptide is Dynactin subunit 2 (dctn2) (Danio rerio (Zebrafish)).